We begin with the raw amino-acid sequence, 89 residues long: Acylphosphatase (89 aa).

An Acylphosphatase-like domain is found at 3–89 (RMTAWVHGFV…RGDLTGFVER (87 aa)). Active-site residues include Arg18 and Asn36.

It belongs to the acylphosphatase family.

It catalyses the reaction an acyl phosphate + H2O = a carboxylate + phosphate + H(+). The protein is Acylphosphatase (acyP) of Rhodococcus jostii (strain RHA1).